The following is a 364-amino-acid chain: Capsular polysaccharide phosphotransferase fcs1 (364 aa).

It belongs to the stealth family.

Its function is as follows. Part of a group II capsule biosynthesis locus. The chain is Capsular polysaccharide phosphotransferase fcs1 (fcs1) from Haemophilus influenzae.